The primary structure comprises 629 residues: Embryonic polyadenylate-binding protein B (629 aa).

RRM domains follow at residues Ala-11 to Arg-89, Gly-99 to Ser-175, Thr-191 to Lys-268, and Val-294 to Arg-370. The region spanning Gln-539–Ala-616 is the PABC domain.

Belongs to the polyadenylate-binding protein type-1 family. Interacts with dazl in an RNA-independent manner. The C-terminus can self-associate and also interact with the C-terminus of pabpc1, independently of RNA. RRM 1 and RRM 2 interact with both eif4g1 and paip1, and the C-terminus also interacts with paip1. Prior to oocyte maturation, found in a complex with dazl and pum2 proteins and spdy1 mRNA; pum2 dissociates from the complex during maturation. Interacts with the translation termination factor sup35/erf3.

It is found in the cytoplasm. Functionally, binds and protects the poly(A) tail of mRNA with or without an AU-rich element (ARE) and prevents mRNA deadenylation. Stimulates the translation of mRNAs to which it is bound during early development. In Xenopus laevis (African clawed frog), this protein is Embryonic polyadenylate-binding protein B (epabp-b).